Here is a 114-residue protein sequence, read N- to C-terminus: Hydrogenase maturation factor HypA (114 aa).

Residue His-2 participates in Ni(2+) binding. Zn(2+)-binding residues include Cys-73, Cys-76, Cys-90, and Cys-93.

It belongs to the HypA/HybF family.

Involved in the maturation of [NiFe] hydrogenases. Required for nickel insertion into the metal center of the hydrogenase. In Chloroflexus aggregans (strain MD-66 / DSM 9485), this protein is Hydrogenase maturation factor HypA.